The following is a 317-amino-acid chain: uncharacterized protein (317 aa).

It belongs to the asfivirus F317L family.

Its subcellular location is the virion. This is an uncharacterized protein from African swine fever virus (strain Badajoz 1971 Vero-adapted) (Ba71V).